A 279-amino-acid polypeptide reads, in one-letter code: MRFSVDLKAYAYPDGTVALSDIRFQVARGEFCGILGSNGSGKTTLLKIMDGLIREYDGSVLLDGRDVRSLQPKDIYRTVGLVFQNPDDQLFAHTVFEDVAFGPRNMGFAEAEVKARVERALEAVDLAGAAAKQIHHLSYGQKKRACIAGLLAMGHEVLLMDEPTAGLDPMGEYRMMELLTRLNRQEGVTIVMATHSVDLVPLFLHRLYILSRGRIVRGGPPEEVFTAPAEMESVKLRLPHIAELIHRLKHEDGVPFRRTPLTIGEARREIMELMETTRS.

An ABC transporter domain is found at 1–237 (MRFSVDLKAY…PAEMESVKLR (237 aa)). ATP is bound at residue 36–43 (GSNGSGKT).

Belongs to the ABC transporter superfamily.

It is found in the cell inner membrane. Its function is as follows. Probably part of an ABC transporter complex. Responsible for energy coupling to the transport system. In Geobacter sulfurreducens (strain ATCC 51573 / DSM 12127 / PCA), this protein is Putative ABC transporter ATP-binding protein GSU3001.